Here is a 253-residue protein sequence, read N- to C-terminus: ATP synthase subunit b 1 (253 aa).

A helical transmembrane segment spans residues 2–22; it reads LIDWFTVIAELVNFLILVWLL.

Belongs to the ATPase B chain family. As to quaternary structure, F-type ATPases have 2 components, F(1) - the catalytic core - and F(0) - the membrane proton channel. F(1) has five subunits: alpha(3), beta(3), gamma(1), delta(1), epsilon(1). F(0) has four main subunits: a(1), b(2) and c(10-14). The alpha and beta chains form an alternating ring which encloses part of the gamma chain. F(1) is attached to F(0) by a central stalk formed by the gamma and epsilon chains, while a peripheral stalk is formed by the delta and b chains.

It is found in the cell inner membrane. Its function is as follows. F(1)F(0) ATP synthase produces ATP from ADP in the presence of a proton or sodium gradient. F-type ATPases consist of two structural domains, F(1) containing the extramembraneous catalytic core and F(0) containing the membrane proton channel, linked together by a central stalk and a peripheral stalk. During catalysis, ATP synthesis in the catalytic domain of F(1) is coupled via a rotary mechanism of the central stalk subunits to proton translocation. In terms of biological role, component of the F(0) channel, it forms part of the peripheral stalk, linking F(1) to F(0). The chain is ATP synthase subunit b 1 from Prosthecochloris aestuarii (strain DSM 271 / SK 413).